We begin with the raw amino-acid sequence, 385 residues long: Alanine racemase (385 aa).

Lys-40 functions as the Proton acceptor; specific for D-alanine in the catalytic mechanism. Lys-40 carries the N6-(pyridoxal phosphate)lysine modification. Arg-139 lines the substrate pocket. Tyr-268 serves as the catalytic Proton acceptor; specific for L-alanine. Met-315 serves as a coordination point for substrate.

It belongs to the alanine racemase family. Pyridoxal 5'-phosphate serves as cofactor.

It catalyses the reaction L-alanine = D-alanine. Its pathway is amino-acid biosynthesis; D-alanine biosynthesis; D-alanine from L-alanine: step 1/1. Its function is as follows. Catalyzes the interconversion of L-alanine and D-alanine. May also act on other amino acids. The polypeptide is Alanine racemase (alr) (Anoxybacillus flavithermus (strain DSM 21510 / WK1)).